Reading from the N-terminus, the 344-residue chain is ATPase GET3 (344 aa).

26-33 (KGGVGKTT) is a binding site for ATP. Asp57 is an active-site residue. ATP is bound by residues Glu239 and Asn266. Zn(2+)-binding residues include Cys276 and Cys279.

This sequence belongs to the arsA ATPase family. In terms of assembly, homodimer. Component of the Golgi to ER traffic (GET) complex, which is composed of GET1, GET2 and GET3. Within the complex, GET1 and GET2 form a heterotetramer which is stabilized by phosphatidylinositol binding and which binds to the GET3 homodimer. Interacts with the chloride channel protein GEF1.

The protein resides in the cytoplasm. Its subcellular location is the endoplasmic reticulum. The protein localises to the golgi apparatus. Functionally, ATPase required for the post-translational delivery of tail-anchored (TA) proteins to the endoplasmic reticulum. Recognizes and selectively binds the transmembrane domain of TA proteins in the cytosol. This complex then targets to the endoplasmic reticulum by membrane-bound receptors GET1 and GET2, where the tail-anchored protein is released for insertion. This process is regulated by ATP binding and hydrolysis. ATP binding drives the homodimer towards the closed dimer state, facilitating recognition of newly synthesized TA membrane proteins. ATP hydrolysis is required for insertion. Subsequently, the homodimer reverts towards the open dimer state, lowering its affinity for the GET1-GET2 receptor, and returning it to the cytosol to initiate a new round of targeting. Cooperates with the HDEL receptor ERD2 to mediate the ATP-dependent retrieval of resident ER proteins that contain a C-terminal H-D-E-L retention signal from the Golgi to the ER. Involved in low-level resistance to the oxyanions arsenite and arsenate, and in heat tolerance. This is ATPase GET3 from Komagataella phaffii (strain GS115 / ATCC 20864) (Yeast).